We begin with the raw amino-acid sequence, 673 residues long: uncharacterized protein (673 aa).

Topologically, residues 1 to 208 (MSTHSNDYFS…STGQLELPPD (208 aa)) are cytoplasmic. Phosphoserine occurs at positions 57, 112, and 172. The helical transmembrane segment at 209–229 (GGYGWVVTFCVFLTMFSTWGC) threads the bilayer. The N-linked (GlcNAc...) asparagine glycan is linked to asparagine 230. The Lumenal portion of the chain corresponds to 230 to 255 (NASFGVDLAYYLNHDTYPGASKYDYA). Residues 256-276 (LIAGLTVFLGQLLSPLVMALM) traverse the membrane as a helical segment. Position 277 (arginine 277) is a topological domain, cytoplasmic. The chain crosses the membrane as a helical span at residues 278 to 298 (IIGLRTTMLFGDAVMLAAYLL). Over 299–315 (ASFTTKLWQLYVTQGFM) the chain is Lumenal. Residues 316 to 336 (VGCSISLIFVPATTVLPGWFL) traverse the membrane as a helical segment. Residues 337-339 (KKR) are Cytoplasmic-facing. Residues 340 to 360 (AVAMGVSLLGTGAGGVVYGLA) traverse the membrane as a helical segment. Over 361–372 (TNKMLSDFGNTR) the chain is Lumenal. A helical membrane pass occupies residues 373–393 (WCLRIIGISCSISVLVAIALL). The Cytoplasmic segment spans residues 394-426 (KERNPTPAIGLKSPRAMFEQLKAMFSLKVITKP). A helical transmembrane segment spans residues 427-447 (FVVLIALWFMFALFAYNMMVF). Topologically, residues 448–504 (TLSSYAISKGLSSHDASTLTAILNGSQSIGRPLMGLAGDKFGRANVTIVLTTLLTIY) are lumenal. N-linked (GlcNAc...) asparagine glycosylation is found at asparagine 471 and asparagine 492. Residues 505–525 (MFAFWIPAHTFVQLIFFSILV) traverse the membrane as a helical segment. Topologically, residues 526–549 (GSCVGVANVMNTVLIADMVKPEEF) are cytoplasmic. A helical transmembrane segment spans residues 550–570 (LPAWAFVNYCGAPFLLVCEVI). Residues 571–584 (AQALTVEKDKSNPY) lie on the Lumenal side of the membrane. A helical membrane pass occupies residues 585 to 605 (LHAQIFCGCCFIAALILISIL). At 606-673 (REYSIRMKLT…FLRMVYPMKV (68 aa)) the chain is on the cytoplasmic side. Position 637 is a phosphoserine (serine 637).

Belongs to the major facilitator superfamily. Monocarboxylate porter (TC 2.A.1.13) family.

The protein resides in the endoplasmic reticulum membrane. This is an uncharacterized protein from Saccharomyces cerevisiae (strain ATCC 204508 / S288c) (Baker's yeast).